Reading from the N-terminus, the 171-residue chain is Adenine phosphoribosyltransferase (171 aa).

Belongs to the purine/pyrimidine phosphoribosyltransferase family. In terms of assembly, homodimer.

The protein localises to the cytoplasm. It carries out the reaction AMP + diphosphate = 5-phospho-alpha-D-ribose 1-diphosphate + adenine. It functions in the pathway purine metabolism; AMP biosynthesis via salvage pathway; AMP from adenine: step 1/1. In terms of biological role, catalyzes a salvage reaction resulting in the formation of AMP, that is energically less costly than de novo synthesis. The sequence is that of Adenine phosphoribosyltransferase from Ruminiclostridium cellulolyticum (strain ATCC 35319 / DSM 5812 / JCM 6584 / H10) (Clostridium cellulolyticum).